A 282-amino-acid chain; its full sequence is Bis(5'-nucleosyl)-tetraphosphatase, symmetrical (282 aa).

This sequence belongs to the Ap4A hydrolase family.

It catalyses the reaction P(1),P(4)-bis(5'-adenosyl) tetraphosphate + H2O = 2 ADP + 2 H(+). Functionally, hydrolyzes diadenosine 5',5'''-P1,P4-tetraphosphate to yield ADP. This Salmonella agona (strain SL483) protein is Bis(5'-nucleosyl)-tetraphosphatase, symmetrical.